The chain runs to 760 residues: General transcription and DNA repair factor IIH helicase subunit XPD (760 aa).

In terms of domain architecture, Helicase ATP-binding spans 7–283 (GLLVYFPYDY…KETDEQRLRD (277 aa)). 42-49 (MPSGTGKT) lines the ATP pocket. Positions 116, 134, 155, and 190 each coordinate [4Fe-4S] cluster. A DEAH box motif is present at residues 234-237 (DEAH). The tract at residues 438–637 (MDASLAIKPV…TQSRILKARL (200 aa)) is mediates interaction with MMS19.

This sequence belongs to the helicase family. RAD3/XPD subfamily. As to quaternary structure, component of the 7-subunit TFIIH core complex composed of XPB/ERCC3, XPD/ERCC2, GTF2H1, GTF2H2, GTF2H3, GTF2H4 and GTF2H5, which is active in NER. The core complex associates with the 3-subunit CDK-activating kinase (CAK) module composed of CCNH/cyclin H, CDK7 and MNAT1 to form the 10-subunit holoenzyme (holo-TFIIH) active in transcription. The interaction with GTF2H2 results in the stimulation of the 5'--&gt;3' helicase activity. Component of the MMXD complex, which includes CIAO1, ERCC2, CIAO2B, MMS19 and SLC25A5. Interacts with CIAO1 and CIAO2B; the interaction WITH CIAO2B is direct. Interacts with ATF7IP. Interacts directly with MMS19. Part of TBP-based Pol II pre-initiation complex (PIC), in which Pol II core assembles with general transcription factors and other specific initiation factors including GTF2E1, GTF2E2, GTF2F1, GTF2F2, TCEA1, ERCC2, ERCC3, GTF2H2, GTF2H3, GTF2H4, GTF2H5, GTF2A1, GTF2A2, GTF2B and TBP; this large multi-subunit PIC complex mediates DNA unwinding and targets Pol II core to the transcription start site where the first phosphodiester bond forms. The cofactor is Mg(2+). Requires [4Fe-4S] cluster as cofactor. In terms of processing, ISGylated.

Its subcellular location is the nucleus. It localises to the cytoplasm. It is found in the cytoskeleton. The protein localises to the spindle. The enzyme catalyses Couples ATP hydrolysis with the unwinding of duplex DNA at the replication fork by translocating in the 5'-3' direction. This creates two antiparallel DNA single strands (ssDNA). The leading ssDNA polymer is the template for DNA polymerase III holoenzyme which synthesizes a continuous strand.. The catalysed reaction is ATP + H2O = ADP + phosphate + H(+). ATP-dependent 5'-3' DNA helicase, component of the general transcription and DNA repair factor IIH (TFIIH) core complex, which is involved in general and transcription-coupled nucleotide excision repair (NER) of damaged DNA and, when complexed to CDK-activating kinase (CAK), involved in transcription by RNA polymerase II. In NER, TFIIH acts by opening DNA around the lesion to allow the excision of the damaged oligonucleotide and its replacement by a new DNA fragment. The ATP-dependent helicase activity of XPD/ERCC2 is required for DNA opening. In transcription, TFIIH has an essential role in transcription initiation. When the pre-initiation complex (PIC) has been established, TFIIH is required for promoter opening and promoter escape. Phosphorylation of the C-terminal tail (CTD) of the largest subunit of RNA polymerase II by the kinase module CAK controls the initiation of transcription. XPD/ERCC2 acts by forming a bridge between CAK and the core-TFIIH complex. Involved in the regulation of vitamin-D receptor activity. As part of the mitotic spindle-associated MMXD complex it plays a role in chromosome segregation. Might have a role in aging process and could play a causative role in the generation of skin cancers. The chain is General transcription and DNA repair factor IIH helicase subunit XPD (Ercc2) from Mus musculus (Mouse).